Reading from the N-terminus, the 490-residue chain is Dipeptide and tripeptide permease A (490 aa).

The Cytoplasmic segment spans residues 1-34 (MSNANNNQPENVSLNAFKQPRAFYLIFSIELWER). A helical membrane pass occupies residues 35–55 (FGYYGLQGIMAVYLVKMLGMT). At 56–59 (EADS) the chain is on the periplasmic side. The chain crosses the membrane as a helical span at residues 60–80 (ITLFSSFSALVYGFVAIGGWL). Residues 81–89 (GDKVLGAKR) are Cytoplasmic-facing. The helical transmembrane segment at 90–110 (VIMLGALVLAIGYAFVAYSGH) threads the bilayer. Position 111 (D111) is a topological domain, periplasmic. Residues 112–132 (LSLVYVGMATIAVGNGLFKAN) traverse the membrane as a helical segment. Residues 133–153 (PSSLLSTCYEKNDPRLDGAFT) are Cytoplasmic-facing. The helical transmembrane segment at 154–174 (MYYMSVNIGSFFSMLATPWLA) threads the bilayer. Over 175 to 176 (AR) the chain is Periplasmic. Residues 177-197 (FGWSVAFSLSVVGMLITLVNF) traverse the membrane as a helical segment. Topologically, residues 198–217 (MMCRRWVKDQGSKPDFAPLQ) are cytoplasmic. Residues 218–238 (VGKLMMTLVGVVILVAISTWL) traverse the membrane as a helical segment. Over 239 to 246 (LHNQTIAR) the chain is Periplasmic. The helical transmembrane segment at 247-267 (WALAIISAGIILIFAKETFAL) threads the bilayer. At 268-274 (QGGARRK) the chain is on the cytoplasmic side. The chain crosses the membrane as a helical span at residues 275–295 (MIVAFLLMLEAVVFFVLYSQM). Over 296-320 (PTSLNFFAIHNVEHSIFGIAFEPEQ) the chain is Periplasmic. The chain crosses the membrane as a helical span at residues 321–341 (YQALNPFWIMVASPILAAIYN). Residues 342 to 352 (KMGDRLPMPHK) lie on the Cytoplasmic side of the membrane. Residues 353–373 (FAIGMVLCSGAFLVLPWGASF) traverse the membrane as a helical segment. Over 374–383 (ANEAGIVSVN) the chain is Periplasmic. A helical transmembrane segment spans residues 384 to 404 (WLILSYALQSIGELMISGLGL). At 405–414 (AMVAQLVPQR) the chain is on the cytoplasmic side. The helical transmembrane segment at 415–435 (LMGFIMGSWFLTTAAAALIAG) threads the bilayer. At 436–460 (KVAALTAVPGGEVADPHASLAIYSH) the chain is on the periplasmic side. Residues 461–481 (VFMQIGLATAVIAVLMLLTAP) traverse the membrane as a helical segment. Residues 482–490 (KLNRMTLGD) lie on the Cytoplasmic side of the membrane.

It belongs to the major facilitator superfamily. Proton-dependent oligopeptide transporter (POT/PTR) (TC 2.A.17) family. DtpA subfamily.

It is found in the cell inner membrane. Its function is as follows. Proton-dependent permease that transports di- and tripeptides. The sequence is that of Dipeptide and tripeptide permease A from Edwardsiella piscicida.